The chain runs to 56 residues: Meucin-25 (56 aa).

Residues 1–31 (MFRIEYSLVQLLLRNVTIPLLLIIQMHIMSS) form the signal peptide.

Belongs to the non-disulfide-bridged peptide (NDBP) superfamily. Antimalarial peptide (group 5) family. In terms of tissue distribution, expressed by the venom gland.

The protein resides in the secreted. In terms of biological role, this synthetic cationic peptide inhibits the development of Plasmodium berghei ookinetes, kills intraerythrocytic P.falciparum, and is cytotoxic to the Drosophila S2 cell at micromolar concentrations. No antibacterial, antifungal and hemolytic activities have been found at micromolar concentrations. The polypeptide is Meucin-25 (Mesobuthus eupeus (Lesser Asian scorpion)).